A 285-amino-acid chain; its full sequence is MAQHTIDQTQVIHTKPSALSYKEKTLVMGILNVTPDSFSDGGKYDSLDKALLHAKEMIDDGAHIIDIGGESTRPGAECVSEDEEMSRVIPVIERITKELGVPISVDTYKASVADEAVKAGASIINDIWGAKHDPKMASVAAEHNVPIVLMHNRPERNYNDLLPDMLSDLMESVKIAVEAGVDEKNIILDPGIGFAKTYHDNLAVMNKLEIFSGLGYPVLLATSRKRFIGRVLDLPPEERAEGTGATVCLGIQKGCDIVRVHDVKQIARMAKMMDAMLNKGGVHHG.

A Pterin-binding domain is found at 25 to 271; it reads TLVMGILNVT…DVKQIARMAK (247 aa). Residue Asn-32 coordinates Mg(2+). Residues Thr-72, Asp-106, Asn-125, Asp-189, Lys-225, and 259-261 contribute to the (7,8-dihydropterin-6-yl)methyl diphosphate site; that span reads RVH.

Belongs to the DHPS family. It depends on Mg(2+) as a cofactor.

The enzyme catalyses (7,8-dihydropterin-6-yl)methyl diphosphate + 4-aminobenzoate = 7,8-dihydropteroate + diphosphate. Its pathway is cofactor biosynthesis; tetrahydrofolate biosynthesis; 7,8-dihydrofolate from 2-amino-4-hydroxy-6-hydroxymethyl-7,8-dihydropteridine diphosphate and 4-aminobenzoate: step 1/2. Catalyzes the condensation of para-aminobenzoate (pABA) with 6-hydroxymethyl-7,8-dihydropterin diphosphate (DHPt-PP) to form 7,8-dihydropteroate (H2Pte), the immediate precursor of folate derivatives. This is Dihydropteroate synthase (sul) from Bacillus subtilis (strain 168).